A 302-amino-acid polypeptide reads, in one-letter code: Thioredoxin-like protein CDSP32, chloroplastic (302 aa).

Residues 1–56 constitute a chloroplast transit peptide; that stretch reads MATVANFLAKPISTVVPRPSSAVASTSSFVFFNHKTNPLFRRKNLPKRLFSAVKIK. Residues 163–298 form the Thioredoxin domain; sequence HEEEGIEPDQ…IGEILRYSGV (136 aa). Residues C219 and C222 each act as nucleophile in the active site. The cysteines at positions 219 and 222 are disulfide-linked.

The protein belongs to the thioredoxin family. In terms of assembly, interacts with the plastidial peroxiredoxin BAS1.

Its subcellular location is the plastid. The protein resides in the chloroplast stroma. Probable thiol-disulfide oxidoreductase involved in resistance to oxidative stress. May participate in the reduction of alkyl hydroperoxides derived from oxidative stress by acting as a physiological electron donor to the BAS1 peroxiredoxin. May regenerate methionine sulfoxide reductase B1 (MSRB1) activity through sulfenic acid reduction. The chain is Thioredoxin-like protein CDSP32, chloroplastic (CDSP32) from Arabidopsis thaliana (Mouse-ear cress).